The sequence spans 139 residues: Transcription factor E (139 aa).

An HTH TFE/IIEalpha-type domain is found at 7-91 (IINKKQDEVS…DYEKILDTLL (85 aa)).

Belongs to the TFE family. As to quaternary structure, monomer. Interaction with RNA polymerase subunits RpoF and RpoE is necessary for Tfe stimulatory transcription activity. Able to interact with Tbp and RNA polymerase in the absence of DNA promoter. Interacts both with the preinitiation and elongation complexes.

Transcription factor that plays a role in the activation of archaeal genes transcribed by RNA polymerase. Facilitates transcription initiation by enhancing TATA-box recognition by TATA-box-binding protein (Tbp), and transcription factor B (Tfb) and RNA polymerase recruitment. Not absolutely required for transcription in vitro, but particularly important in cases where Tbp or Tfb function is not optimal. It dynamically alters the nucleic acid-binding properties of RNA polymerases by stabilizing the initiation complex and destabilizing elongation complexes. Seems to translocate with the RNA polymerase following initiation and acts by binding to the non template strand of the transcription bubble in elongation complexes. This Nanoarchaeum equitans (strain Kin4-M) protein is Transcription factor E.